The following is a 356-amino-acid chain: Protein ATP1B4 (356 aa).

Topologically, residues 1–109 (MRRQLRSRRA…SLARTGQSRS (109 aa)) are nuclear. The disordered stretch occupies residues 26 to 78 (EANHNYLADEEEEAEEEAQVMMVPGLEEEEEEEEGKEEEEEREEEEGQGQSTG). Composition is skewed to acidic residues over residues 33 to 43 (ADEEEEAEEEA) and 51 to 72 (LEEEEEEEEGKEEEEEREEEEG). The chain crosses the membrane as a helical; Signal-anchor for type II membrane protein span at residues 110 to 130 (LILVIYFFFYASLAAVITLFI). The Perinuclear space segment spans residues 131-356 (YMLFLAISPY…RIIFTLNIET (226 aa)).

It belongs to the X(+)/potassium ATPases subunit beta family. In terms of assembly, associates with a SMAD7-transcriptional complex. Interacts with TOR1AIP1. Does not associate with known Na,K-ATPase alpha-subunits. Interacts with SNW1. As to expression, expressed in skeletal muscle (at protein level). Expressed during postnatal development in skeletal muscle and heart.

The protein localises to the nucleus inner membrane. May act as a transcriptional coregulator during muscle development through its interaction with SNW1. Has lost its ancestral function as a Na,K-ATPase beta-subunit. In Mus musculus (Mouse), this protein is Protein ATP1B4 (Atp1b4).